The sequence spans 381 residues: Endophilin-A homolog (381 aa).

Positions 1-21 are membrane-binding amphipathic helix; sequence MSLSGLRKQFNKANQYLSETM. The region spanning 18-247 is the BAR domain; the sequence is SETMGAAEPT…LGHRIKDAAA (230 aa). A coiled-coil region spans residues 170–238; it reads CKKRQQRRDD…QCLENLQQQL (69 aa). Residues 246–323 are disordered; that stretch reads AARPREEHVP…PPPLSQQQKP (78 aa). Polar residues predominate over residues 260–271; sequence ANESRTPRSSFR. Pro residues predominate over residues 305–317; the sequence is YQGPPPGGLPPPL. Residues 320 to 379 enclose the SH3 domain; that stretch reads QQKPQCRALFDFDAQSEGELDFKEGTLIELVSQIDENWYEGRVNGKTGLFPVTYVQVLVP.

The protein belongs to the endophilin family. In terms of assembly, may form a homodimer (via the BAR domain). As to expression, expressed in neurons and posterior intestine.

Its subcellular location is the synapse. The protein localises to the cytoplasmic vesicle. The protein resides in the secretory vesicle. It localises to the synaptic vesicle. It is found in the membrane. Its function is as follows. Involved in synaptic vesicle (SV) recycling in neurons probably by regulating clathrin-mediated endocytosis. By controlling SV endocytosis, regulates the rate of excitatory postsynaptic currents (EPSCs) at neuromuscular junctions and thus locomotion. In a similar manner, involved in necrotic neuronal cell death induced by abnormal hyperactivation of ion channels. Plays a minor role in responses to mechanical stimuli. Plays a minor role in unc-26/synaptojanin localization to synapses. This is Endophilin-A homolog from Caenorhabditis elegans.